Here is a 344-residue protein sequence, read N- to C-terminus: [LysW]-L-2-aminoadipate 6-phosphate reductase (344 aa).

NADP(+) contacts are provided by residues 12–15, 36–38, and Leu-75; these read SGYA and SRR. Cys-148 is an active-site residue. Residues Ser-180, Ala-184, and Asn-312 each coordinate NADP(+).

Belongs to the NAGSA dehydrogenase family. Type 1 subfamily. LysY sub-subfamily. As to quaternary structure, homotetramer. Interacts with LysW. May form a ternary complex with LysW and LysZ.

The protein localises to the cytoplasm. The enzyme catalyses [amino-group carrier protein]-C-terminal-N-(1-carboxy-5-oxopentan-1-yl)-L-glutamine + phosphate + NADP(+) = [amino-group carrier protein]-C-terminal-N-(1-carboxy-5-phosphooxy-5-oxopentan-1-yl)-L-glutamine + NADPH + H(+). It functions in the pathway amino-acid biosynthesis; L-lysine biosynthesis via AAA pathway; L-lysine from L-alpha-aminoadipate (Thermus route): step 3/5. Functionally, catalyzes the NADPH-dependent reduction of [LysW]-aminoadipate 6-phosphate to yield [LysW]-aminoadipate 6-semialdehyde. The chain is [LysW]-L-2-aminoadipate 6-phosphate reductase from Thermus thermophilus (strain ATCC BAA-163 / DSM 7039 / HB27).